The sequence spans 396 residues: Tyrosine--tRNA ligase (396 aa).

The 'HIGH' region motif lies at 43–52 (PSSPDIHLGH). Residues 227–231 (KMSKS) carry the 'KMSKS' region motif. An ATP-binding site is contributed by lysine 230. Positions 338-396 (TGVIDFIILSGLAKSKSEARRLLEQGAVEINSEKISDQNTPVKCGDIIKAGKRRYSKAI) constitute an S4 RNA-binding domain.

It belongs to the class-I aminoacyl-tRNA synthetase family. TyrS type 2 subfamily. Homodimer.

The protein localises to the cytoplasm. The enzyme catalyses tRNA(Tyr) + L-tyrosine + ATP = L-tyrosyl-tRNA(Tyr) + AMP + diphosphate + H(+). Functionally, catalyzes the attachment of tyrosine to tRNA(Tyr) in a two-step reaction: tyrosine is first activated by ATP to form Tyr-AMP and then transferred to the acceptor end of tRNA(Tyr). This chain is Tyrosine--tRNA ligase, found in Dehalococcoides mccartyi (strain CBDB1).